The primary structure comprises 958 residues: Probable transport protein MmpL1 (958 aa).

Helical transmembrane passes span 19–39 (ALSL…NVVA), 192–212 (SLHT…FIAY), 216–236 (SAAL…RGII), 252–272 (VNVL…FLVG), 295–315 (TAHV…CLGF), 329–349 (AIGL…IIAV), 377–397 (WPGP…LALP), 762–782 (YDVM…MLGI), 791–811 (VIVG…VLIW), 814–834 (ILHM…MLAV), 868–888 (VVTI…ASDL), and 906–927 (TLVV…WFWW).

It belongs to the resistance-nodulation-cell division (RND) (TC 2.A.6) family. MmpL subfamily.

The protein resides in the cell membrane. The polypeptide is Probable transport protein MmpL1 (mmpL1) (Mycobacterium tuberculosis (strain CDC 1551 / Oshkosh)).